Reading from the N-terminus, the 310-residue chain is tRNA-cytidine(32) 2-sulfurtransferase (310 aa).

Residues 45 to 50 (SGGKDS) carry the PP-loop motif motif. The [4Fe-4S] cluster site is built by cysteine 120, cysteine 123, and cysteine 211.

Belongs to the TtcA family. In terms of assembly, homodimer. It depends on Mg(2+) as a cofactor. [4Fe-4S] cluster serves as cofactor.

The protein localises to the cytoplasm. The enzyme catalyses cytidine(32) in tRNA + S-sulfanyl-L-cysteinyl-[cysteine desulfurase] + AH2 + ATP = 2-thiocytidine(32) in tRNA + L-cysteinyl-[cysteine desulfurase] + A + AMP + diphosphate + H(+). It functions in the pathway tRNA modification. In terms of biological role, catalyzes the ATP-dependent 2-thiolation of cytidine in position 32 of tRNA, to form 2-thiocytidine (s(2)C32). The sulfur atoms are provided by the cysteine/cysteine desulfurase (IscS) system. In Shewanella sp. (strain ANA-3), this protein is tRNA-cytidine(32) 2-sulfurtransferase.